The following is a 410-amino-acid chain: Translation initiation factor 2 subunit gamma (410 aa).

A tr-type G domain is found at glutamine 6–lysine 203. The segment at glycine 15 to threonine 22 is G1. Residues aspartate 18, threonine 22, glycine 43, and serine 45 each coordinate Mg(2+). Aspartate 18–serine 23 contacts GTP. The interval glycine 43–arginine 47 is G2. Cysteine 58, cysteine 61, cysteine 73, and cysteine 76 together coordinate Zn(2+). A G3 region spans residues aspartate 90 to glycine 93. Residues asparagine 146–aspartate 149 and serine 181–histidine 183 each bind GTP. Residues asparagine 146–aspartate 149 form a G4 region. Residues serine 181–histidine 183 are G5.

This sequence belongs to the TRAFAC class translation factor GTPase superfamily. Classic translation factor GTPase family. EIF2G subfamily. As to quaternary structure, heterotrimer composed of an alpha, a beta and a gamma chain. It depends on Mg(2+) as a cofactor.

It carries out the reaction GTP + H2O = GDP + phosphate + H(+). Functionally, eIF-2 functions in the early steps of protein synthesis by forming a ternary complex with GTP and initiator tRNA. This chain is Translation initiation factor 2 subunit gamma, found in Methanococcus maripaludis (strain C6 / ATCC BAA-1332).